The primary structure comprises 539 residues: Phosphoenolpyruvate carboxykinase (ATP) (539 aa).

Positions 64, 206, and 212 each coordinate substrate. ATP-binding positions include Lys212, His231, and 247–255 (GLSGTGKTT). Positions 212 and 231 each coordinate Mn(2+). Asp268 lines the Mn(2+) pocket. ATP is bound by residues Glu296, Arg332, 448-449 (RI), and Thr454. Substrate is bound at residue Arg332.

Belongs to the phosphoenolpyruvate carboxykinase (ATP) family. In terms of assembly, monomer. The cofactor is Mn(2+).

It localises to the cytoplasm. It catalyses the reaction oxaloacetate + ATP = phosphoenolpyruvate + ADP + CO2. The protein operates within carbohydrate biosynthesis; gluconeogenesis. In terms of biological role, involved in the gluconeogenesis. Catalyzes the conversion of oxaloacetate (OAA) to phosphoenolpyruvate (PEP) through direct phosphoryl transfer between the nucleoside triphosphate and OAA. This is Phosphoenolpyruvate carboxykinase (ATP) from Pectobacterium carotovorum subsp. carotovorum (strain PC1).